Here is a 214-residue protein sequence, read N- to C-terminus: Probable nicotinate-nucleotide adenylyltransferase (214 aa).

Belongs to the NadD family.

The enzyme catalyses nicotinate beta-D-ribonucleotide + ATP + H(+) = deamido-NAD(+) + diphosphate. Its pathway is cofactor biosynthesis; NAD(+) biosynthesis; deamido-NAD(+) from nicotinate D-ribonucleotide: step 1/1. Catalyzes the reversible adenylation of nicotinate mononucleotide (NaMN) to nicotinic acid adenine dinucleotide (NaAD). This chain is Probable nicotinate-nucleotide adenylyltransferase, found in Pseudomonas fluorescens (strain ATCC BAA-477 / NRRL B-23932 / Pf-5).